The primary structure comprises 460 residues: Baeyer-Villiger oxidase AgnL3 (460 aa).

The protein belongs to the questin oxidase family. NADPH serves as cofactor.

Its pathway is secondary metabolite biosynthesis. Functionally, baeyer-Villiger oxidase; part of the gene cluster that mediates the biosynthesis of agnestins, dihydroxy-xanthone metabolites. The pathway begins with the assembly and cyclization of atrochrysone thioester by the non-reducing polyketide synthase Agnpks1. The atrochrysone carboxyl ACP thioesterase AgnL7 then breaks the thioester bond and releases the atrochrysone carboxylic acid as the first enzyme-free intermediate. The decarboxylase AgnL1 then catalyzes the concerted decarboxylation-elimination required to convert atochrysone carboxylic acid into emodin anthrone, which is further oxidized to emodin by the anthrone oxygenase AgnL2. Emodin then undergoes reduction catalyzed by the oxidoreductase AgnL4 to yield the dihydroquinone tautomer which is the substrate for reduction by the short chain dehydrogenase AgnL6 reduction to produce hydroxyketone, followed by AgnL8 dehydration and likely spontaneous autoxidation to chrysophanol. Baeyer-Villiger oxidation by the oxidase AgnL3 leads to monodictyphenone via cleavage of the C-10/C-10a bond of chrysophanol. Alternative cleavage at the C-4a/C-10 bond of chrysophanol also leads to the formation some cephalone F. Further conversion to agnestins A and B, requires reduction to dihydro-monodictyphenone, oxidation to agnestin C probably via an epoxide, and rearrangement to either agnestin A or agnestin B directly, although agnestin A or agnestin B can also interconvert. Within the cluster, AgnR1 is the only unassigned oxidoreductase present which could be involved in this conversion. However, AgnR1 seems not to be involved in this step, and thus genes involved in the proposed oxidation/reduction may be located elsewhere on the genome. Further agnestin A derivatives are probably formed by spontaneous decarboxylations, dehydrations and methanolysis reactions. In Paecilomyces divaricatus (Penicillium divaricatum), this protein is Baeyer-Villiger oxidase AgnL3.